Here is a 434-residue protein sequence, read N- to C-terminus: uncharacterized protein (434 aa).

An N-terminal signal peptide occupies residues 1–17; sequence MTFLLFQLLVLLRYSIG. 12 helical membrane passes run 48 to 68, 70 to 90, 112 to 132, 141 to 161, 173 to 193, 206 to 226, 232 to 252, 271 to 291, 305 to 325, 344 to 364, 380 to 400, and 404 to 424; these read AAIS…FTVL, EWVY…SVTA, YRVA…FTIF, TYGT…NAVV, WITG…RLVT, YGVH…TSFV, YCGL…LSGL, EGVY…HLGY, TSSI…TILF, WVLA…YIPL, ATFL…DTIF, and FSSL…IGTI.

The protein resides in the membrane. This is an uncharacterized protein from Arabidopsis thaliana (Mouse-ear cress).